Here is a 471-residue protein sequence, read N- to C-terminus: Secretogranin-3 (471 aa).

Positions 1-22 (MGFLWTGSWILVLVLNSGPIQA) are cleaved as a signal peptide. Disordered regions lie at residues 24–45 (PKPE…ERPL), 89–108 (TVEK…QLNV), and 345–404 (KLEK…TDEA). Positions 28-45 (GSQDKSLHNRELSAERPL) are enriched in basic and acidic residues. S40 carries the phosphoserine modification. The O-linked (Xyl...) (chondroitin sulfate) serine glycan is linked to S40. Composition is skewed to basic and acidic residues over residues 345–355 (KLEKNTTDSKS) and 364–404 (KSQE…TDEA). S365 bears the Phosphoserine mark.

As to quaternary structure, interacts with CHGA. Interacts with secretogranin II/SCG2. Interacts (via C-terminus) with CPE. In terms of tissue distribution, expressed in various brain areas, with highest levels in the arcuate nucleus and the lateral hypothalamic area, as well as the paraventricular nucleus and the ventromedial hypothalamus (at protein level).

It localises to the cytoplasmic vesicle. Its subcellular location is the secretory vesicle. The protein resides in the secretory vesicle membrane. The protein localises to the secreted. Its function is as follows. Member of the granin protein family that regulates the biogenesis of secretory granules. Acts as a sorting receptor for intragranular proteins including chromogranin A/CHGA. May also play a role in angiogenesis. Promotes endothelial proliferation, migration and tube formation through MEK/ERK signaling pathway. The polypeptide is Secretogranin-3 (Scg3) (Mus musculus (Mouse)).